The primary structure comprises 138 residues: Small ribosomal subunit protein uS11c (138 aa).

The disordered stretch occupies residues 1-21; sequence MAKSISKIGSRKNARIGSRKQ. Basic residues predominate over residues 9 to 21; sequence GSRKNARIGSRKQ.

It belongs to the universal ribosomal protein uS11 family. In terms of assembly, part of the 30S ribosomal subunit.

It is found in the plastid. Its subcellular location is the chloroplast. This is Small ribosomal subunit protein uS11c from Cicer arietinum (Chickpea).